A 154-amino-acid polypeptide reads, in one-letter code: Ribonuclease HI (154 aa).

The RNase H type-1 domain maps to 1-142; the sequence is MTKHVEIFTD…CDELARTAAE (142 aa). Mg(2+) contacts are provided by D10, E48, D70, and D134.

The protein belongs to the RNase H family. As to quaternary structure, monomer. Mg(2+) is required as a cofactor.

It localises to the cytoplasm. It carries out the reaction Endonucleolytic cleavage to 5'-phosphomonoester.. Functionally, endonuclease that specifically degrades the RNA of RNA-DNA hybrids. The protein is Ribonuclease HI of Vibrio parahaemolyticus serotype O3:K6 (strain RIMD 2210633).